The following is a 238-amino-acid chain: CD209 antigen-like protein A (238 aa).

At Met-1–Gln-51 the chain is on the cytoplasmic side. A helical; Signal-anchor for type II membrane protein transmembrane segment spans residues Val-52–Leu-72. At Val-73–Lys-238 the chain is on the extracellular side. Cys-108 and Cys-119 are oxidised to a cystine. A C-type lectin domain is found at Phe-115–Lys-229. Asn-130 carries N-linked (GlcNAc...) asparagine glycosylation. 2 disulfides stabilise this stretch: Cys-136-Cys-228 and Cys-207-Cys-220. Positions 198, 200, 202, 205, 216, and 217 each coordinate Ca(2+). A glycan (N-linked (GlcNAc...) asparagine) is linked at Asn-216.

As to expression, predominantly expressed in dendritic cells. Detected at very low levels in lung, spleen, lymph nodes and bone marrow.

It is found in the membrane. Its function is as follows. Probable pathogen-recognition receptor. May mediate the endocytosis of pathogens which are subsequently degraded in lysosomal compartments. May recognize in a calcium-dependent manner high mannose N-linked oligosaccharides in a variety of pathogen antigens. The protein is CD209 antigen-like protein A (Cd209a) of Mus musculus (Mouse).